We begin with the raw amino-acid sequence, 475 residues long: Arginine/ornithine antiporter (475 aa).

12 helical membrane passes run 10–30, 42–62, 74–94, 101–121, 157–177, 205–225, 238–258, 283–303, 333–353, 361–381, 397–417, and 451–471; these read IGLL…GVFG, GPVL…ALSL, GIFS…SGWG, LGNV…FPIF, LVTI…IVLF, NCMM…MLSA, ILGL…PYGY, WGGY…WLSW, PTFA…TLLF, AYSL…AYQI, LLIG…AGVS, and WLIT…VVSG.

This sequence belongs to the amino acid-polyamine-organocation (APC) superfamily. Basic amino acid/polyamine antiporter (APA) (TC 2.A.3.2) family.

The protein localises to the cell membrane. It catalyses the reaction L-ornithine(in) + L-arginine(out) = L-ornithine(out) + L-arginine(in). Catalyzes electroneutral exchange between L-arginine and L-ornithine. This is Arginine/ornithine antiporter (arcD) from Latilactobacillus sakei (Lactobacillus sakei).